We begin with the raw amino-acid sequence, 312 residues long: MIEFEKPKITKFDESENYGKFVVEPLERGYGTTLGNSLRRVLLSSLPGAAVTSIQIEGVQHEFATIPGVREDVIQIVLAVKGIAIKSYVESEKQIELDVTGPMDVTAGDILTDSDIEIVNKDHYLFSIAEGHSMRAVMTVKKGYGYVPDDENKVDGAPIGTIAVDSIYTPVSKVNYQVEPARVGGDSSYDKLTLEITTNGTIVSDEALSLSAKILTDHLNLFVDLSEVAAEAETLVVKDEVKTERVLDKIIEEMDFSVRAYNGLKRAGINTVADIVEMSEADMIKVKNLGHKSVEEVKVKLTELGLSLKKRK.

The alpha N-terminal domain (alpha-NTD) stretch occupies residues 1-226; the sequence is MIEFEKPKIT…DHLNLFVDLS (226 aa). The segment at 243-312 is alpha C-terminal domain (alpha-CTD); the sequence is TERVLDKIIE…ELGLSLKKRK (70 aa).

Belongs to the RNA polymerase alpha chain family. Homodimer. The RNAP catalytic core consists of 2 alpha, 1 beta, 1 beta' and 1 omega subunit. When a sigma factor is associated with the core the holoenzyme is formed, which can initiate transcription.

The enzyme catalyses RNA(n) + a ribonucleoside 5'-triphosphate = RNA(n+1) + diphosphate. Functionally, DNA-dependent RNA polymerase catalyzes the transcription of DNA into RNA using the four ribonucleoside triphosphates as substrates. This Lactococcus lactis subsp. lactis (strain IL1403) (Streptococcus lactis) protein is DNA-directed RNA polymerase subunit alpha.